A 96-amino-acid polypeptide reads, in one-letter code: Co-chaperonin GroES (96 aa).

Belongs to the GroES chaperonin family. Heptamer of 7 subunits arranged in a ring. Interacts with the chaperonin GroEL.

The protein localises to the cytoplasm. Its function is as follows. Together with the chaperonin GroEL, plays an essential role in assisting protein folding. The GroEL-GroES system forms a nano-cage that allows encapsulation of the non-native substrate proteins and provides a physical environment optimized to promote and accelerate protein folding. GroES binds to the apical surface of the GroEL ring, thereby capping the opening of the GroEL channel. This is Co-chaperonin GroES from Haemophilus influenzae (strain PittEE).